A 95-amino-acid chain; its full sequence is 6 kDa early secretory antigenic target (95 aa).

Transmembrane regions (helical) follow at residues Ile11–Trp43 and Glu49–Ser85. Positions Gln56–Glu87 form a coiled coil.

This sequence belongs to the WXG100 family. ESAT-6 subfamily. In terms of assembly, forms a tight 1:1 complex with EsxB (CFP-10).

The protein resides in the secreted. The protein localises to the host membrane. Functionally, a secreted protein. Acts as a strong host T-cell antigen. Plays a number of roles in modulating the host's immune response to infection as well as being responsible for bacterial escape into the host cytoplasm. This Mycobacterium bovis (strain ATCC BAA-935 / AF2122/97) protein is 6 kDa early secretory antigenic target (esxA).